Consider the following 430-residue polypeptide: Adenylosuccinate synthetase (430 aa).

Residues 12–18 and 40–42 each bind GTP; these read GDEGKGK and GHT. Asp-13 serves as the catalytic Proton acceptor. Mg(2+)-binding residues include Asp-13 and Gly-40. IMP is bound by residues 13–16, 38–41, Thr-128, Arg-142, Gln-223, Thr-238, and Arg-302; these read DEGK and NAGH. Catalysis depends on His-41, which acts as the Proton donor. 298 to 304 lines the substrate pocket; that stretch reads TTTGRPR. Residues Arg-304, 330–332, and 413–415 each bind GTP; these read SID and SVG.

It belongs to the adenylosuccinate synthetase family. In terms of assembly, homodimer. The cofactor is Mg(2+).

It localises to the cytoplasm. It catalyses the reaction IMP + L-aspartate + GTP = N(6)-(1,2-dicarboxyethyl)-AMP + GDP + phosphate + 2 H(+). It functions in the pathway purine metabolism; AMP biosynthesis via de novo pathway; AMP from IMP: step 1/2. Plays an important role in the de novo pathway of purine nucleotide biosynthesis. Catalyzes the first committed step in the biosynthesis of AMP from IMP. This chain is Adenylosuccinate synthetase, found in Lactococcus lactis subsp. lactis (strain IL1403) (Streptococcus lactis).